Consider the following 316-residue polypeptide: Protein PXR1 (316 aa).

The 47-residue stretch at T25–A71 folds into the G-patch domain. Residues G146 to L280 form a disordered region. Basic and acidic residues predominate over residues D179–I195. A compositionally biased stretch (basic residues) spans K196–K209. A compositionally biased stretch (basic and acidic residues) spans E210–E240. The span at K241–K260 shows a compositional bias: basic residues. A compositionally biased stretch (basic and acidic residues) spans E261–R270.

Belongs to the PINX1 family.

It is found in the nucleus. The protein localises to the nucleolus. In terms of biological role, involved in rRNA-processing at A0, A1 and A2 sites and negatively regulates telomerase. The polypeptide is Protein PXR1 (PXR1) (Debaryomyces hansenii (strain ATCC 36239 / CBS 767 / BCRC 21394 / JCM 1990 / NBRC 0083 / IGC 2968) (Yeast)).